Consider the following 321-residue polypeptide: 2,3,4,5-tetrahydropyridine-2,6-dicarboxylate N-succinyltransferase (321 aa).

2 residues coordinate Mg(2+): Asp166 and Glu183. Catalysis depends on Glu199, which acts as the Acyl-anhydride intermediate. Succinyl-CoA-binding positions include Arg201, Gly216, Ser219, Ala242, 257-258 (EA), Gly265, Lys281, and 294-297 (RRNS).

The protein belongs to the type 2 tetrahydrodipicolinate N-succinyltransferase family. In terms of assembly, homotrimer.

The protein resides in the cytoplasm. It carries out the reaction (S)-2,3,4,5-tetrahydrodipicolinate + succinyl-CoA + H2O = (S)-2-succinylamino-6-oxoheptanedioate + CoA. It functions in the pathway amino-acid biosynthesis; L-lysine biosynthesis via DAP pathway; LL-2,6-diaminopimelate from (S)-tetrahydrodipicolinate (succinylase route): step 1/3. In terms of biological role, catalyzes the conversion of the cyclic tetrahydrodipicolinate (THDP) into the acyclic N-succinyl-L-2-amino-6-oxopimelate using succinyl-CoA. The protein is 2,3,4,5-tetrahydropyridine-2,6-dicarboxylate N-succinyltransferase of Micrococcus luteus (strain ATCC 4698 / DSM 20030 / JCM 1464 / CCM 169 / CCUG 5858 / IAM 1056 / NBRC 3333 / NCIMB 9278 / NCTC 2665 / VKM Ac-2230) (Micrococcus lysodeikticus).